The following is a 221-amino-acid chain: Small ribosomal subunit protein uS5 (221 aa).

Residues 1–40 form a disordered region; the sequence is MMAQRNSGAPDNAGGSNDGREGGRGRRDNRDDRRGGRDNA. Residues 18-40 show a composition bias toward basic and acidic residues; sequence DGREGGRGRRDNRDDRRGGRDNA. The region spanning 45 to 108 is the S5 DRBM domain; that stretch reads YLERVVTINR…DEARKNFFRV (64 aa).

Belongs to the universal ribosomal protein uS5 family. As to quaternary structure, part of the 30S ribosomal subunit. Contacts proteins S4 and S8.

In terms of biological role, with S4 and S12 plays an important role in translational accuracy. Located at the back of the 30S subunit body where it stabilizes the conformation of the head with respect to the body. The polypeptide is Small ribosomal subunit protein uS5 (Mycobacteroides abscessus (strain ATCC 19977 / DSM 44196 / CCUG 20993 / CIP 104536 / JCM 13569 / NCTC 13031 / TMC 1543 / L948) (Mycobacterium abscessus)).